The chain runs to 258 residues: Tegument protein VP22 (258 aa).

Residues 66–143 form a disordered region; it reads VQPAARGRDR…RAPPGANAVA (78 aa). The segment covering 77–118 has biased composition (low complexity); sequence AAAGTTVAAPAAAPARRSSSRASSRPPRAAADPPVLRPATRG. The short motif at 131–134 is the Nuclear localization signal element; that stretch reads PRPR. The short motif at 204–216 is the Nuclear export signal element; the sequence is LDRMLKSAAIRIL. A disordered region spans residues 234–258; sequence RAQRPAARGSTSGGESRLRGERARP. Basic and acidic residues predominate over residues 249 to 258; that stretch reads SRLRGERARP.

It belongs to the alphaherpesvirinae VP22 tegument protein family. In terms of assembly, interacts with gE (via C-terminus); this interaction is necessary for the recruitment of VP22 to the Golgi and its packaging into virions. Interacts with gM (via C-terminus). Interacts with VP16; this interaction allows the formation of a tripartite complex composed of VP16, VP22 and UL41/VHS. Interacts with the capsid-binding protein UL16. Interacts with host CGAS. Highly phosphorylated in the host cell. Packaging is selective for underphosphorylated forms.

The protein localises to the virion tegument. It is found in the host cytoplasm. It localises to the host nucleus. Its subcellular location is the host Golgi apparatus. Functionally, tegument protein that plays different roles during the time course of infection. Participates in both the accumulation of viral mRNAs and viral protein translation at late time of infection. Modulates the RNase activity of the virion host shutoff protein UL41 probably to ensure necessary levels of key cellular mRNAs and proteins. Plays a role in microtubule reorganization that occurs after viral infection by stabilizing microtubule network. Plays a role in the inhibition of host innate immune system by targeting the CGAS enzymatic activity which is the principal cytosolic DNA sensor that detects invading viral DNA. Acts by mediating disruption of liquid-like droplets in which CGAS is activated, thereby preventing CGAS activity. The polypeptide is Tegument protein VP22 (Bovine herpesvirus 1.1 (strain Cooper) (BoHV-1)).